We begin with the raw amino-acid sequence, 139 residues long: Lamprin 0.9 (139 aa).

Residues 1-19 (MAAAIQALLVLALLHLATA) form the signal peptide. 8 tandem repeats follow at residues 42–46 (GGLGY), 47–51 (GGLGY), 52–56 (GGLGV), 57–61 (AGLGV), 62–66 (AGLGY), 67–71 (GGLGY), 92–96 (GGLGY), and 106–110 (GGLGY). The tract at residues 42-110 (GGLGYGGLGY…YHHALGGLGY (69 aa)) is 8 X 5 AA approximate repeats.

The polymeric lamprin chains self-aggregate to form fibers and have secondary structures particularly rich in beta-sheets and in beta-turns.

It localises to the secreted. Its subcellular location is the extracellular space. The protein localises to the extracellular matrix. Self-aggregating protein that is part of the soluble form of lamprin. The protein is Lamprin 0.9 of Petromyzon marinus (Sea lamprey).